Consider the following 187-residue polypeptide: Large ribosomal subunit protein uL5 (187 aa).

Belongs to the universal ribosomal protein uL5 family. In terms of assembly, part of the 50S ribosomal subunit; part of the 5S rRNA/L5/L18/L25 subcomplex. Contacts the 5S rRNA and the P site tRNA. Forms a bridge to the 30S subunit in the 70S ribosome.

In terms of biological role, this is one of the proteins that bind and probably mediate the attachment of the 5S RNA into the large ribosomal subunit, where it forms part of the central protuberance. In the 70S ribosome it contacts protein S13 of the 30S subunit (bridge B1b), connecting the 2 subunits; this bridge is implicated in subunit movement. Contacts the P site tRNA; the 5S rRNA and some of its associated proteins might help stabilize positioning of ribosome-bound tRNAs. This is Large ribosomal subunit protein uL5 from Mycobacterium sp. (strain JLS).